We begin with the raw amino-acid sequence, 478 residues long: Glycogen synthase (478 aa).

Lys15 is a binding site for ADP-alpha-D-glucose.

Belongs to the glycosyltransferase 1 family. Bacterial/plant glycogen synthase subfamily.

The enzyme catalyses [(1-&gt;4)-alpha-D-glucosyl](n) + ADP-alpha-D-glucose = [(1-&gt;4)-alpha-D-glucosyl](n+1) + ADP + H(+). The protein operates within glycan biosynthesis; glycogen biosynthesis. Its function is as follows. Synthesizes alpha-1,4-glucan chains using ADP-glucose. In Clostridium botulinum (strain Alaska E43 / Type E3), this protein is Glycogen synthase.